We begin with the raw amino-acid sequence, 536 residues long: Ribulokinase (536 aa).

It belongs to the ribulokinase family.

The enzyme catalyses D-ribulose + ATP = D-ribulose 5-phosphate + ADP + H(+). It catalyses the reaction L-ribulose + ATP = L-ribulose 5-phosphate + ADP + H(+). Its pathway is carbohydrate degradation; L-arabinose degradation via L-ribulose; D-xylulose 5-phosphate from L-arabinose (bacterial route): step 2/3. In Staphylococcus epidermidis (strain ATCC 12228 / FDA PCI 1200), this protein is Ribulokinase.